The primary structure comprises 154 residues: Endoribonuclease YbeY (154 aa).

Zn(2+) contacts are provided by His113, His117, and His123.

The protein belongs to the endoribonuclease YbeY family. Requires Zn(2+) as cofactor.

The protein localises to the cytoplasm. Functionally, single strand-specific metallo-endoribonuclease involved in late-stage 70S ribosome quality control and in maturation of the 3' terminus of the 16S rRNA. This is Endoribonuclease YbeY from Vibrio campbellii (strain ATCC BAA-1116).